Here is a 147-residue protein sequence, read N- to C-terminus: Catabolic 3-dehydroquinase 2 (147 aa).

Residue Y23 is the Proton acceptor of the active site. 3 residues coordinate substrate: N74, H80, and D87. H100 serves as the catalytic Proton donor. Substrate contacts are provided by residues 101–102 and R111; that span reads IT.

This sequence belongs to the type-II 3-dehydroquinase family. As to quaternary structure, homododecamer. Adopts a ring-like structure, composed of an arrangement of two hexameric rings stacked on top of one another.

It carries out the reaction 3-dehydroquinate = 3-dehydroshikimate + H2O. Its pathway is aromatic compound metabolism; 3,4-dihydroxybenzoate biosynthesis; 3,4-dihydroxybenzoate from 3-dehydroquinate: step 1/2. In terms of biological role, is involved in the catabolism of quinate. Allows the utilization of quinate as carbon source via the beta-ketoadipate pathway. The sequence is that of Catabolic 3-dehydroquinase 2 from Aspergillus terreus (strain NIH 2624 / FGSC A1156).